Here is a 476-residue protein sequence, read N- to C-terminus: Aspartyl/glutamyl-tRNA(Asn/Gln) amidotransferase subunit B (476 aa).

This sequence belongs to the GatB/GatE family. GatB subfamily. As to quaternary structure, heterotrimer of A, B and C subunits.

The enzyme catalyses L-glutamyl-tRNA(Gln) + L-glutamine + ATP + H2O = L-glutaminyl-tRNA(Gln) + L-glutamate + ADP + phosphate + H(+). It carries out the reaction L-aspartyl-tRNA(Asn) + L-glutamine + ATP + H2O = L-asparaginyl-tRNA(Asn) + L-glutamate + ADP + phosphate + 2 H(+). Functionally, allows the formation of correctly charged Asn-tRNA(Asn) or Gln-tRNA(Gln) through the transamidation of misacylated Asp-tRNA(Asn) or Glu-tRNA(Gln) in organisms which lack either or both of asparaginyl-tRNA or glutaminyl-tRNA synthetases. The reaction takes place in the presence of glutamine and ATP through an activated phospho-Asp-tRNA(Asn) or phospho-Glu-tRNA(Gln). This Oleidesulfovibrio alaskensis (strain ATCC BAA-1058 / DSM 17464 / G20) (Desulfovibrio alaskensis) protein is Aspartyl/glutamyl-tRNA(Asn/Gln) amidotransferase subunit B.